A 628-amino-acid polypeptide reads, in one-letter code: MAILPLLLCLLPLAPASSPPQSATPSPCPRRCRCQTQSLPLSVLCPGAGLLFVPPSLDRRAAELRLADNFIASVRRRDLANMTGLLHLSLSRNTIRHVAAGAFADLRALRALHLDGNRLTSLGEGQLRGLVNLRHLILSNNQLAALAAGALDDCAETLEDLDLSYNNLEQLPWEALGRLGNVNTLGLDHNLLASVPAGAFSRLHKLARLDMTSNRLTTIPPDPLFSRLPLLARPRGSPASALVLAFGGNPLHCNCELVWLRRLAREDDLEACASPPALGGRYFWAVGEEEFVCEPPVVTHRSPPLAVPAGRPAALRCRAVGDPEPRVRWVSPQGRLLGNSSRARAFPNGTLELLVTEPGDGGIFTCIAANAAGEATAAVELTVGPPPPPQLANSTSCDPPRDGDPDALTPPSAASASAKVADTGPPTDRGVQVTEHGATAALVQWPDQRPIPGIRMYQIQYNSSADDILVYRMIPAESRSFLLTDLASGRTYDLCVLAVYEDSATGLTATRPVGCARFSTEPALRPCGAPHAPFLGGTMIIALGGVIVASVLVFIFVLLMRYKVHGGQPPGKAKIPAPVSSVCSQTNGALGPTPTPAPPAPEPAALRAHTVVQLDCEPWGPGHEPVGP.

The signal sequence occupies residues 1-16; that stretch reads MAILPLLLCLLPLAPA. At 17–539 the chain is on the extracellular side; it reads SSPPQSATPS…PHAPFLGGTM (523 aa). Residues 19–59 form the LRRNT domain; the sequence is PPQSATPSPCPRRCRCQTQSLPLSVLCPGAGLLFVPPSLDR. LRR repeat units follow at residues 60–83, 84–105, 108–129, 132–153, 157–178, 181–202, and 205–226; these read RAAE…ANMT, GLLH…AFAD, ALRA…QLRG, NLRH…ALDD, TLED…ALGR, NVNT…AFSR, and KLAR…PLFS. Asn81 is a glycosylation site (N-linked (GlcNAc...) asparagine). In terms of domain architecture, LRRCT spans 249 to 295; it reads NPLHCNCELVWLRRLAREDDLEACASPPALGGRYFWAVGEEEFVCEP. Positions 295 to 382 constitute an Ig-like domain; sequence PPVVTHRSPP…GEATAAVELT (88 aa). Cys317 and Cys366 are oxidised to a cystine. Asn339, Asn348, and Asn393 each carry an N-linked (GlcNAc...) asparagine glycan. The interval 382-430 is disordered; that stretch reads TVGPPPPPQLANSTSCDPPRDGDPDALTPPSAASASAKVADTGPPTDRG. Positions 406 to 422 are enriched in low complexity; it reads DALTPPSAASASAKVAD. The 99-residue stretch at 425-523 folds into the Fibronectin type-III domain; sequence PPTDRGVQVT…GCARFSTEPA (99 aa). Asn462 carries N-linked (GlcNAc...) asparagine glycosylation. A helical transmembrane segment spans residues 540 to 560; sequence IIALGGVIVASVLVFIFVLLM. At 561 to 628 the chain is on the cytoplasmic side; the sequence is RYKVHGGQPP…WGPGHEPVGP (68 aa).

This sequence belongs to the LRFN family. As to quaternary structure, can form heteromeric complexes with LRFN1, LRFN2, LRFN4 and LRFN5. Able to form homomeric complexes across cell junctions, between adjacent cells. Does not interact with DLG4. Post-translationally, N-glycosylated.

It localises to the cell membrane. The protein resides in the cell projection. The protein localises to the axon. It is found in the dendrite. Its subcellular location is the synapse. It localises to the presynaptic cell membrane. The protein resides in the postsynaptic cell membrane. Functionally, cell adhesion molecule that mediates homophilic cell-cell adhesion in a Ca(2+)-independent manner. Promotes neurite outgrowth in hippocampal neurons. This chain is Leucine-rich repeat and fibronectin type-III domain-containing protein 3 (LRFN3), found in Homo sapiens (Human).